The chain runs to 188 residues: dCTP deaminase (188 aa).

109–114 (KSTYAR) serves as a coordination point for dCTP. The active-site Proton donor/acceptor is the glutamate 135. Glutamine 154, tyrosine 168, and glutamine 178 together coordinate dCTP.

Belongs to the dCTP deaminase family. In terms of assembly, homotrimer.

It carries out the reaction dCTP + H2O + H(+) = dUTP + NH4(+). The protein operates within pyrimidine metabolism; dUMP biosynthesis; dUMP from dCTP (dUTP route): step 1/2. Its function is as follows. Catalyzes the deamination of dCTP to dUTP. This chain is dCTP deaminase, found in Helicobacter pylori (strain Shi470).